The following is a 177-amino-acid chain: FMRFamide-related peptides (177 aa).

The N-terminal stretch at 1 to 21 (MNHPRSIAMLAALWLVVSVTS) is a signal peptide. A propeptide spanning residues 22–32 (TPVRRSPDLEA) is cleaved from the precursor. Phenylalanine 45 bears the Phenylalanine amide mark. Positions 47–93 (RSTLPVVPPAQPSFLQRYSAPQPAALTADDLMTFLRAYEEDYSSPVS) are excised as a propeptide. Residues phenylalanine 102 and phenylalanine 111 each carry the phenylalanine amide modification. Residues 113–131 (RSVDEENSGYQAETNTYPQ) constitute a propeptide that is removed on maturation. The residue at position 143 (leucine 143) is a Leucine amide. The propeptide occupies 145–177 (RDNELSESNDEDRYEVESERTKRSVVDPCNDCA). The tract at residues 145 to 177 (RDNELSESNDEDRYEVESERTKRSVVDPCNDCA) is disordered. Acidic residues predominate over residues 149–158 (LSESNDEDRY). Residues 159–169 (EVESERTKRSV) are compositionally biased toward basic and acidic residues.

This sequence belongs to the FARP (FMRFamide related peptide) family. Only expressed in the CNS and predominantly in the thoracic ganglia. Strongest expression is seen in two pairs of large neurons in each thoracic ganglion. These neurons are ventrolateral neurosecretory cells 1 and 2, they project their axons through transverse nerves into the periphery where axons from the prothoracic ganglion innervate the prothoracic gland.

Its subcellular location is the secreted. Its function is as follows. Regulates ecdysteroidogenesis by direct innervation of the prothoracic gland by reducing cAMP production via the receptor for myosuppressin. The neurons that innervate the prothoracic gland during the fifth instar are most active during days 0-4, after which they reduce and then peak again on day 6. Expression suppresses the biosynthesis of steroid hormones called ecdysteroids that elicit molting and metamorphosis. This chain is FMRFamide-related peptides, found in Bombyx mori (Silk moth).